A 359-amino-acid polypeptide reads, in one-letter code: 3-isopropylmalate dehydrogenase (359 aa).

74 to 85 (GPKWGTGSVRPE) provides a ligand contact to NAD(+). Substrate contacts are provided by Arg92, Arg102, Arg131, and Asp220. Residues Asp220, Asp245, and Asp249 each contribute to the Mg(2+) site. 284–295 (GSAPDLPANKVN) lines the NAD(+) pocket.

This sequence belongs to the isocitrate and isopropylmalate dehydrogenases family. In terms of assembly, homodimer. Mg(2+) serves as cofactor. Requires Mn(2+) as cofactor.

The protein resides in the cytoplasm. It catalyses the reaction (2R,3S)-3-isopropylmalate + NAD(+) = 4-methyl-2-oxopentanoate + CO2 + NADH. The protein operates within amino-acid biosynthesis; L-leucine biosynthesis; L-leucine from 3-methyl-2-oxobutanoate: step 3/4. In terms of biological role, catalyzes the oxidation of 3-carboxy-2-hydroxy-4-methylpentanoate (3-isopropylmalate) to 3-carboxy-4-methyl-2-oxopentanoate. The product decarboxylates to 4-methyl-2 oxopentanoate. The sequence is that of 3-isopropylmalate dehydrogenase (LEU2) from Kluyveromyces marxianus (Yeast).